A 728-amino-acid polypeptide reads, in one-letter code: Catalase-peroxidase (728 aa).

Residues 1–26 (MDNPTDTAGKCPVAHGNKPRGPSNRD) are disordered. Positions 96 to 218 (WHSAGTYRIT…LGAVQMGLIY (123 aa)) form a cross-link, tryptophyl-tyrosyl-methioninium (Trp-Tyr) (with M-244). H97 functions as the Proton acceptor in the catalytic mechanism. The segment at residues 218 to 244 (YVNPEGPNGNPDPVAAARDIRETFARM) is a cross-link (tryptophyl-tyrosyl-methioninium (Tyr-Met) (with W-96)). H259 is a binding site for heme b.

It belongs to the peroxidase family. Peroxidase/catalase subfamily. In terms of assembly, homodimer or homotetramer. The cofactor is heme b. Formation of the three residue Trp-Tyr-Met cross-link is important for the catalase, but not the peroxidase activity of the enzyme.

It catalyses the reaction H2O2 + AH2 = A + 2 H2O. It carries out the reaction 2 H2O2 = O2 + 2 H2O. Its function is as follows. Bifunctional enzyme with both catalase and broad-spectrum peroxidase activity. Important for stationary phase survival. This is Catalase-peroxidase from Rhizobium etli (strain ATCC 51251 / DSM 11541 / JCM 21823 / NBRC 15573 / CFN 42).